The following is a 146-amino-acid chain: VHWTAEEKHLLGSLWAKVDVADIGGEALGRLLVVYPWTQRFFADFGNLSSATAICGNPRVKAHGKKVFTMFGEALKHLDNLKETFASLSELHCDKLHVDTENFKLLGNLVIVVLAARLHDSFTPAAQAAFHKLAYSVAHALARRYH.

Positions 2-146 (HWTAEEKHLL…VAHALARRYH (145 aa)) constitute a Globin domain. Positions 63 and 92 each coordinate heme b.

This sequence belongs to the globin family. In terms of assembly, there are three forms of hemoglobin in Sphenodon: A, A' and D. Hb A is a tetramer of two alpha-A and two beta-1, Hb A' is a tetramer of two alpha-a and two beta-2, Hb D is a tetramer of two alpha-D and two beta-2.

Functionally, involved in oxygen transport from the lung to the various peripheral tissues. This is Hemoglobin subunit beta-1 (HBB1) from Sphenodon punctatus (Tuatara).